We begin with the raw amino-acid sequence, 517 residues long: MDIIGGQHLRQMWDDLADVYGHKTALICESSGGVVNRYSYLELNQEINRTTNLFYTLGIRKGDKVALHLDNCPEFIFCWFGLAKIGAIMVPINARLLREESAWILQNSQACLLVTSAQFYPMYQQIQQEDATQLRHICLTDVALPADDGVSSFTQLKNQQPATLCYAPPLSTDDTAEILFTSGTTSRPKGVVITHYNLRFAGYYSAWQCALRDDDVYLTVMPAFHIDCQCTAAMAAFSAGATFVLVEKYSARAFWGQVQKYRATVTECIPMMIRTLMAQPPSANDRQHRLREVMFYLNLSEQEKDAFCERFGVRLLTSYGMTETIVGIIGDRPGDKRRWPSIGRAGFCYEAEIRDDHNRPLPAGEIGEICIKGVPGKTIFKEYFLNPKATAKVLEADGWLHTGDTGYCDEEGFFYFVDRRCNMIKRGGENVSCVELENIIATHPKIQDIVVVGIKDSIRDEAIKAFVVLNEGETLSEEEFFRFCEQNMAKFKVPSYLEIRKDLPRNCSGKIIRKNLK.

The protein belongs to the ATP-dependent AMP-binding enzyme family.

It catalyses the reaction 4-(trimethylamino)butanoate + ATP + CoA = 4-(trimethylamino)butanoyl-CoA + AMP + diphosphate. The catalysed reaction is crotonobetaine + ATP + CoA = crotonobetainyl-CoA + AMP + diphosphate. The enzyme catalyses (R)-carnitine + ATP + CoA = (R)-carnitinyl-CoA + AMP + diphosphate. Its pathway is amine and polyamine metabolism; carnitine metabolism. In terms of biological role, catalyzes the transfer of CoA to carnitine, generating the initial carnitinyl-CoA needed for the CaiB reaction cycle. Also has activity toward crotonobetaine and gamma-butyrobetaine. The sequence is that of Crotonobetaine/carnitine--CoA ligase from Shigella sonnei (strain Ss046).